The sequence spans 2326 residues: Telomere-associated protein RIF1 (2326 aa).

Disordered stretches follow at residues 381–410 (QGTPSRVPSNPNSANPPQKPGPYPFASPAT), 1105–1965 (YTQS…CITP), and 1993–2050 (VENK…DDSL). Polar residues predominate over residues 382–396 (GTPSRVPSNPNSANP). Basic and acidic residues-rich tracts occupy residues 1112 to 1126 (SLEKSPLENAKEDFK) and 1150 to 1182 (CKVDNPLEDVKEKSAYHIEKNSNSEEESSRGDR). The segment covering 1216–1225 (SAISCSSTSS) has biased composition (low complexity). Polar residues-rich tracts occupy residues 1233-1242 (QPASRRQSFI) and 1252-1270 (SRPFSPSALNSVSEVSQSA). Residues 1290 to 1299 (KSGEESRKSS) are compositionally biased toward basic and acidic residues. Composition is skewed to polar residues over residues 1318–1332 (MEQQGNQQAKLVTNS) and 1341–1353 (SFVSNSVENSPES). Positions 1376-1402 (PDIKKAEAVMAEIEKVRAFEMDSKENT) are enriched in basic and acidic residues. The segment covering 1403–1412 (PPKTAVSSEQ) has biased composition (polar residues). Basic and acidic residues-rich tracts occupy residues 1448 to 1480 (QDKEDGYQKKDKRKEDEKALQKKVPQTKEDASQ), 1489 to 1511 (ASEHAIKKESSLPERSAAEDLGS), and 1519 to 1539 (GADEEANRSAGKPEDTLKSDS). Residues 1564-1573 (SSQGLLSSIE) show a composition bias toward polar residues. Positions 1586–1595 (SLKKKSGKTK) are enriched in basic residues. Residues 1596-1609 (NKSDSLEGKRKDVQ) show a composition bias toward basic and acidic residues. 2 stretches are compositionally biased toward polar residues: residues 1610-1640 (PESQSHGVSSQVDESKNLSGMNESELSSEVS) and 1671-1683 (RTSPSTQNVSVEQ). Basic and acidic residues predominate over residues 1697-1712 (RVSDEVLKGDENKCIE). Positions 1713 to 1745 (KQSSVEQHSSVQPENVQGANTSGSDLSSLQMQD) are enriched in polar residues. The span at 1776-1785 (SKSEDPRELI) shows a compositional bias: basic and acidic residues. Positions 1795 to 1813 (AVSTAEVSGSSNLEESLSI) are enriched in polar residues. 3 stretches are compositionally biased toward basic and acidic residues: residues 1869-1884 (VEIKVKEEVDGNDRAE), 1908-1925 (SEEKAAVEKEEESQHGEM), and 1932-1954 (DGSKPETKQMDELEGNRDGKEEA). The segment covering 2009-2036 (SFTSVNGSPSGVQARCTWSPSASPSTSI) has biased composition (polar residues).

Belongs to the RIF1 family. Interacts with TP53BP1 (when phosphorylated by ATM).

It is found in the nucleus. Its subcellular location is the chromosome. The protein localises to the telomere. The protein resides in the cytoplasm. It localises to the cytoskeleton. It is found in the spindle. Key regulator of TP53BP1 that plays a key role in the repair of double-strand DNA breaks (DSBs) in response to DNA damage: acts by promoting non-homologous end joining (NHEJ)-mediated repair of DSBs. In response to DNA damage, interacts with ATM-phosphorylated TP53BP1, allowing recruitment to DNA DSBs. Once recruited to DSBs, RIF1 and TP53BP1 act by promoting NHEJ-mediated repair of DSBs. In the same time, RIF1 and TP53BP1 specifically counteract DSBs resection via homologous recombination (HR) during G1 phase. The protein is Telomere-associated protein RIF1 of Gallus gallus (Chicken).